The sequence spans 126 residues: Nucleoside diphosphate kinase B (126 aa).

5 residues coordinate ATP: lysine 6, phenylalanine 37, threonine 68, arginine 79, and asparagine 89. Histidine 92 acts as the Pros-phosphohistidine intermediate in catalysis.

Belongs to the NDK family. Mg(2+) is required as a cofactor.

Its subcellular location is the cytoplasm. The protein localises to the nucleus. The protein resides in the cell projection. It localises to the lamellipodium. It is found in the ruffle. It catalyses the reaction a 2'-deoxyribonucleoside 5'-diphosphate + ATP = a 2'-deoxyribonucleoside 5'-triphosphate + ADP. The enzyme catalyses a ribonucleoside 5'-diphosphate + ATP = a ribonucleoside 5'-triphosphate + ADP. Major role in the synthesis of nucleoside triphosphates other than ATP. The sequence is that of Nucleoside diphosphate kinase B (nme2) from Merluccius capensis (Shallow-water Cape hake).